A 516-amino-acid chain; its full sequence is D-aminopeptidase (516 aa).

Serine 61 serves as the catalytic Nucleophile. Lysine 64 (proton donor/acceptor) is an active-site residue. Residues 476–486 (RRSMDAPAPGD) are important for specificity. Substrate is bound at residue aspartate 480.

It belongs to the peptidase S12 family. As to quaternary structure, homodimer.

It carries out the reaction Release of an N-terminal D-amino acid from a peptide, Xaa-|-Yaa-, in which Xaa is preferably D-Ala, D-Ser or D-Thr. D-amino acid amides and methyl esters also are hydrolyzed, as is glycine amide.. Its activity is regulated as follows. Inhibited by beta-lactam compounds such as 6-aminopenicillic acid, 7-aminocephalosporanic acid, benzylpenicillin and ampicillin. Inhibited by p-chloromercuribenzoate. In terms of biological role, hydrolyzes N-terminal residues in D-amino acid-containing peptides. The polypeptide is D-aminopeptidase (Cereibacter sphaeroides (strain ATCC 17029 / ATH 2.4.9) (Rhodobacter sphaeroides)).